Consider the following 93-residue polypeptide: MSAPDVRLTAWVHGWVQGVGFRWWTRCRALELGLTGYAANHADGRVLVVAQGPRAACQKLLQLLQGDTTPGRVAKVVADWSQSTEQITGFSER.

An Acylphosphatase-like domain is found at Arg-7–Arg-93. Active-site residues include Arg-22 and Asn-40.

This sequence belongs to the acylphosphatase family.

The enzyme catalyses an acyl phosphate + H2O = a carboxylate + phosphate + H(+). This is Acylphosphatase (acyP) from Mycobacterium tuberculosis (strain ATCC 25177 / H37Ra).